Here is a 395-residue protein sequence, read N- to C-terminus: S-adenosylmethionine synthase 2 (395 aa).

Glu-9 is a binding site for Mg(2+). His-15 is an ATP binding site. A K(+)-binding site is contributed by Glu-43. Residues Glu-56 and Gln-99 each contribute to the L-methionine site. Residues Asp-167–Lys-169, Ser-235–Phe-238, Asp-246, Arg-252–Lys-253, Ala-269, Lys-273, and Lys-277 each bind ATP. Position 246 (Asp-246) interacts with L-methionine. Lys-277 contacts L-methionine.

It belongs to the AdoMet synthase family. As to quaternary structure, homotetramer. The cofactor is Mn(2+). Mg(2+) is required as a cofactor. It depends on Co(2+) as a cofactor. Requires K(+) as cofactor.

It localises to the cytoplasm. It catalyses the reaction L-methionine + ATP + H2O = S-adenosyl-L-methionine + phosphate + diphosphate. The protein operates within amino-acid biosynthesis; S-adenosyl-L-methionine biosynthesis; S-adenosyl-L-methionine from L-methionine: step 1/1. Catalyzes the formation of S-adenosylmethionine from methionine and ATP. The reaction comprises two steps that are both catalyzed by the same enzyme: formation of S-adenosylmethionine (AdoMet) and triphosphate, and subsequent hydrolysis of the triphosphate. The protein is S-adenosylmethionine synthase 2 (METK2) of Suaeda salsa (Seepweed).